A 160-amino-acid chain; its full sequence is Nascent polypeptide-associated complex subunit alpha (160 aa).

An NAC-A/B domain is found at 10–75; that stretch reads TKGEKKTREA…HSFDDIASRL (66 aa). The region spanning 120-159 is the UBA domain; sequence VNPKDVEVVMKETKASREKVVETLIATKNDLVSAVLELTT.

Belongs to the NAC-alpha family. In terms of assembly, part of the nascent polypeptide-associated complex (NAC), consisting of nacA and nacB.

It is found in the cytoplasm. Its subcellular location is the nucleus. Functionally, component of the nascent polypeptide-associated complex (NAC), a dynamic component of the ribosomal exit tunnel, protecting the emerging polypeptides from interaction with other cytoplasmic proteins to ensure appropriate nascent protein targeting. The NAC complex also promotes mitochondrial protein import by enhancing productive ribosome interactions with the outer mitochondrial membrane and blocks the inappropriate interaction of ribosomes translating non-secretory nascent polypeptides with translocation sites in the membrane of the endoplasmic reticulum. May also be involved in transcription regulation. The chain is Nascent polypeptide-associated complex subunit alpha (nacA) from Dictyostelium discoideum (Social amoeba).